The chain runs to 226 residues: 7-cyano-7-deazaguanine synthase (226 aa).

Residue 11-21 (LSGGLDSATCL) coordinates ATP. 4 residues coordinate Zn(2+): Cys-191, Cys-201, Cys-204, and Cys-207.

The protein belongs to the QueC family. Zn(2+) is required as a cofactor.

It carries out the reaction 7-carboxy-7-deazaguanine + NH4(+) + ATP = 7-cyano-7-deazaguanine + ADP + phosphate + H2O + H(+). It functions in the pathway purine metabolism; 7-cyano-7-deazaguanine biosynthesis. Catalyzes the ATP-dependent conversion of 7-carboxy-7-deazaguanine (CDG) to 7-cyano-7-deazaguanine (preQ(0)). The protein is 7-cyano-7-deazaguanine synthase of Aromatoleum aromaticum (strain DSM 19018 / LMG 30748 / EbN1) (Azoarcus sp. (strain EbN1)).